The following is a 288-amino-acid chain: Oxaloacetate decarboxylase (288 aa).

Position 47 (S47) interacts with substrate. Mg(2+) is bound at residue D85. Substrate is bound by residues R156 and H232.

Belongs to the isocitrate lyase/PEP mutase superfamily. Oxaloacetate decarboxylase family. In terms of assembly, homotetramer; dimer of dimers. Mg(2+) serves as cofactor.

The enzyme catalyses oxaloacetate + H(+) = pyruvate + CO2. Catalyzes the decarboxylation of oxaloacetate into pyruvate. Seems to play a role in maintaining cellular concentrations of bicarbonate and pyruvate. In Rhodopseudomonas palustris (strain BisB18), this protein is Oxaloacetate decarboxylase.